Consider the following 224-residue polypeptide: PKHD-type hydroxylase Shewmr7_0698 (224 aa).

Residues 78–176 form the Fe2OG dioxygenase domain; it reads QFYPPLFNRY…RTAAFMWLQS (99 aa). Fe cation is bound by residues histidine 96, aspartate 98, and histidine 157. Arginine 167 provides a ligand contact to 2-oxoglutarate.

The cofactor is Fe(2+). L-ascorbate is required as a cofactor.

This is PKHD-type hydroxylase Shewmr7_0698 from Shewanella sp. (strain MR-7).